Consider the following 254-residue polypeptide: 3-dehydroquinate dehydratase (254 aa).

Residues 47 to 49 (EFR) and R83 each bind 3-dehydroquinate. Residue H144 is the Proton donor/acceptor of the active site. K171 serves as the catalytic Schiff-base intermediate with substrate. The 3-dehydroquinate site is built by R213, S232, and Q236.

It belongs to the type-I 3-dehydroquinase family. Homodimer.

The enzyme catalyses 3-dehydroquinate = 3-dehydroshikimate + H2O. Its pathway is metabolic intermediate biosynthesis; chorismate biosynthesis; chorismate from D-erythrose 4-phosphate and phosphoenolpyruvate: step 3/7. In terms of biological role, involved in the third step of the chorismate pathway, which leads to the biosynthesis of aromatic amino acids. Catalyzes the cis-dehydration of 3-dehydroquinate (DHQ) and introduces the first double bond of the aromatic ring to yield 3-dehydroshikimate. The polypeptide is 3-dehydroquinate dehydratase (Neisseria meningitidis serogroup B (strain ATCC BAA-335 / MC58)).